Here is a 319-residue protein sequence, read N- to C-terminus: MPRPGRNTYSDQKPPYSYISLTAMAIQGSQEKMLPLSEIYKFIMDRFPYYRENTQRWQNSLRHNLSFNDCFIKIPRRPDQPGKGSFWALHPRCGDMFENGSFLRRRKRFKVMKSDHLAPSKASDAAQYLQQQAKLRLSALAASGTHLPPMSTYNLGVSPTSSFKHPFAIENIIAREYKMPGGLAFSTMQPMPAAYPLHNQLTTVGGSIGTGWPHMYSSSMLDSTTPISMANSDYSVSAYGVPIKPICHGAQTLLPAIPVPIKPTAALPALPTHIPAILSNSSPSMSPTSPQTATSQSSPATPSDTLTNPSTALLSVAVH.

The fork-head DNA-binding region spans 13 to 107 (KPPYSYISLT…ENGSFLRRRK (95 aa)). Positions 278–310 (LSNSSPSMSPTSPQTATSQSSPATPSDTLTNPS) are disordered. Over residues 279 to 305 (SNSSPSMSPTSPQTATSQSSPATPSDT) the composition is skewed to low complexity.

In terms of tissue distribution, in early gastrulae, expressed in the inner layer of the posterior dorsal ectoderm and in non-involuted mesoderm. By the mid-gastrula stage, expressed solely in the posterior ectoderm. At the end of gastrulation, expressed in ectodermal regions fated to become diencephalon, midbrain and hindbrain, and weakly expressed in regions fated to become spinal cord and tailbud. At the neurula stage, expressed in the midbrain and posterior forebrain (diencephalon) but not in the more anterior forebrain (telencephalon). Also expressed posteriorly in rhombomere 5. At tailbud stages, expression remains in the anterior brain and is also detectable along the length of the central nervous system and in the tailbud.

Its subcellular location is the nucleus. Functionally, probable transcription factor. May be involved in the early anteroposterior patterning of the neuroectoderm. This chain is Forkhead box protein B1, found in Xenopus laevis (African clawed frog).